A 392-amino-acid polypeptide reads, in one-letter code: MSHNPDAIAPHGGQLVNRIATPEQREEFLSKADFLPRVQLDDRAVSDVEMIAIGAFSPLTGFMSQEDYDRTVTEMRLANGLVWSIPITLSVTEEVASPLQEGGLIRLDNSRGEFIAVLQLTQKYNYDKTREAINVYRTDDVKHPGVQVLYSQGTVHLAGDIWLLQREPHPQFPTYQIDPSASRQLFKDKGWKTIVGFQTRNPIHRAHEYIQKCALEIVDGLFLHPLVGATKEDDIAADVRMRCYEILLEHYYPLDRVTLAINPAAMRYAGPREAIFHALVRKNYGCTHFIVGRDHAGVGDYYGTYDAQYIFDEFAPGELGIVPMKFEHAFYCTRTKQMATSKTSPSRPEERIHLSGTKVREMLRRGELPPPEFSRPEVAAELARAMRIEVPV.

The protein belongs to the sulfate adenylyltransferase family.

The enzyme catalyses sulfate + ATP + H(+) = adenosine 5'-phosphosulfate + diphosphate. Its pathway is sulfur metabolism; hydrogen sulfide biosynthesis; sulfite from sulfate: step 1/3. The polypeptide is Sulfate adenylyltransferase (Nostoc punctiforme (strain ATCC 29133 / PCC 73102)).